The primary structure comprises 69 residues: Large ribosomal subunit protein eL38 (69 aa).

This sequence belongs to the eukaryotic ribosomal protein eL38 family.

This is Large ribosomal subunit protein eL38 (RPL38) from Solanum lycopersicum (Tomato).